The primary structure comprises 61 residues: Large ribosomal subunit protein eL29 (61 aa).

Positions 1–26 (MAKSKNHTNHNQNKKAHRNGIKRPQK) are enriched in basic residues. The tract at residues 1–32 (MAKSKNHTNHNQNKKAHRNGIKRPQKHRYDSL) is disordered.

This sequence belongs to the eukaryotic ribosomal protein eL29 family. In terms of assembly, component of the large ribosomal subunit (LSU). Mature yeast ribosomes consist of a small (40S) and a large (60S) subunit. The 40S small subunit contains 1 molecule of ribosomal RNA (18S rRNA) and at least 33 different proteins. The large 60S subunit contains 3 rRNA molecules (25S, 5.8S and 5S rRNA) and at least 46 different proteins.

It is found in the cytoplasm. It localises to the nucleus. The protein localises to the nucleolus. Its function is as follows. Component of the ribosome, a large ribonucleoprotein complex responsible for the synthesis of proteins in the cell. The small ribosomal subunit (SSU) binds messenger RNAs (mRNAs) and translates the encoded message by selecting cognate aminoacyl-transfer RNA (tRNA) molecules. The large subunit (LSU) contains the ribosomal catalytic site termed the peptidyl transferase center (PTC), which catalyzes the formation of peptide bonds, thereby polymerizing the amino acids delivered by tRNAs into a polypeptide chain. The nascent polypeptides leave the ribosome through a tunnel in the LSU and interact with protein factors that function in enzymatic processing, targeting, and the membrane insertion of nascent chains at the exit of the ribosomal tunnel. The protein is Large ribosomal subunit protein eL29 (rpl29) of Schizosaccharomyces pombe (strain 972 / ATCC 24843) (Fission yeast).